Consider the following 456-residue polypeptide: MKTIIIRKIPPIDDFKRFVPKRFSRFPQLYLELLENKNKVKLNCIGKEFVPTTPPLSTGRETIVSKDPHVVQSSISNTPIRTEIKDTPRYEETPIKRTITVTNVKTVKSSSISGMNGRNRLYDDDLFDDDRYKSPTTRKFQGEKRDEDIRLIPKSSNIGSSKYKPVLTRVEENENKKIHIDQRKESIVNDERKKNPEFREKPDKNEDKKVKPPPSLKEIENKGIDHEENEEDKKRELMFKLQLLQKQYPLRDIPDFTIRSEYKSMKKTYDIIVKQLSVDSSVETYKNYLVGGFMVCEMVFGRIGFDMEGFTQQQLLSMNSYEKLLLELGEKTYTPAGMDKWPVEVRLALAILFNAVWFIAAKMIMKKTKINILSLFNNTKGLNKSGTTPNSVSPRTWGNSKSPQSEFNFIGRKNENNSVGRTQMKGPSINRIDEGFGSESDESRREMREQGIETLK.

Composition is skewed to basic and acidic residues over residues 181-210 and 217-231; these read DQRK…DKKV and KEIE…ENEE. The tract at residues 181 to 231 is disordered; it reads DQRKESIVNDERKKNPEFREKPDKNEDKKVKPPPSLKEIENKGIDHEENEE. Positions 216-248 form a coiled coil; the sequence is LKEIENKGIDHEENEEDKKRELMFKLQLLQKQY. The chain crosses the membrane as a helical span at residues 347 to 365; that stretch reads LALAILFNAVWFIAAKMIM. Polar residues predominate over residues 383–407; the sequence is NKSGTTPNSVSPRTWGNSKSPQSEF. Residues 383–456 form a disordered region; the sequence is NKSGTTPNSV…MREQGIETLK (74 aa). The span at 441 to 456 shows a compositional bias: basic and acidic residues; the sequence is DESRREMREQGIETLK.

This sequence belongs to the IIV-6 067R family.

It is found in the membrane. This is an uncharacterized protein from Invertebrate iridescent virus 6 (IIV-6).